A 222-amino-acid chain; its full sequence is Probable transaldolase (222 aa).

Catalysis depends on Lys-91, which acts as the Schiff-base intermediate with substrate.

The protein belongs to the transaldolase family. Type 3B subfamily.

The protein localises to the cytoplasm. It carries out the reaction D-sedoheptulose 7-phosphate + D-glyceraldehyde 3-phosphate = D-erythrose 4-phosphate + beta-D-fructose 6-phosphate. Its pathway is carbohydrate degradation; pentose phosphate pathway; D-glyceraldehyde 3-phosphate and beta-D-fructose 6-phosphate from D-ribose 5-phosphate and D-xylulose 5-phosphate (non-oxidative stage): step 2/3. Transaldolase is important for the balance of metabolites in the pentose-phosphate pathway. The protein is Probable transaldolase of Chlorobium phaeovibrioides (strain DSM 265 / 1930) (Prosthecochloris vibrioformis (strain DSM 265)).